Reading from the N-terminus, the 170-residue chain is ATP synthase subunit b, chloroplastic (170 aa).

The helical transmembrane segment at 15–35 (ILETNVINLAVVVGVVVFFVG) threads the bilayer.

Belongs to the ATPase B chain family. F-type ATPases have 2 components, F(1) - the catalytic core - and F(0) - the membrane proton channel. F(1) has five subunits: alpha(3), beta(3), gamma(1), delta(1), epsilon(1). F(0) has four main subunits: a(1), b(1), b'(1) and c(10-14). The alpha and beta chains form an alternating ring which encloses part of the gamma chain. F(1) is attached to F(0) by a central stalk formed by the gamma and epsilon chains, while a peripheral stalk is formed by the delta, b and b' chains.

It is found in the plastid. The protein localises to the chloroplast thylakoid membrane. F(1)F(0) ATP synthase produces ATP from ADP in the presence of a proton or sodium gradient. F-type ATPases consist of two structural domains, F(1) containing the extramembraneous catalytic core and F(0) containing the membrane proton channel, linked together by a central stalk and a peripheral stalk. During catalysis, ATP synthesis in the catalytic domain of F(1) is coupled via a rotary mechanism of the central stalk subunits to proton translocation. In terms of biological role, component of the F(0) channel, it forms part of the peripheral stalk, linking F(1) to F(0). This Stigeoclonium helveticum (Green alga) protein is ATP synthase subunit b, chloroplastic.